A 231-amino-acid polypeptide reads, in one-letter code: 5'-methylthioadenosine/S-adenosylhomocysteine nucleosidase (231 aa).

E12 (proton acceptor) is an active-site residue. Residues G78, I153, and 174–175 (ME) contribute to the substrate site. D198 acts as the Proton donor in catalysis.

The protein belongs to the PNP/UDP phosphorylase family. MtnN subfamily.

The enzyme catalyses S-adenosyl-L-homocysteine + H2O = S-(5-deoxy-D-ribos-5-yl)-L-homocysteine + adenine. It carries out the reaction S-methyl-5'-thioadenosine + H2O = 5-(methylsulfanyl)-D-ribose + adenine. It catalyses the reaction 5'-deoxyadenosine + H2O = 5-deoxy-D-ribose + adenine. It participates in amino-acid biosynthesis; L-methionine biosynthesis via salvage pathway; S-methyl-5-thio-alpha-D-ribose 1-phosphate from S-methyl-5'-thioadenosine (hydrolase route): step 1/2. In terms of biological role, catalyzes the irreversible cleavage of the glycosidic bond in both 5'-methylthioadenosine (MTA) and S-adenosylhomocysteine (SAH/AdoHcy) to adenine and the corresponding thioribose, 5'-methylthioribose and S-ribosylhomocysteine, respectively. Also cleaves 5'-deoxyadenosine, a toxic by-product of radical S-adenosylmethionine (SAM) enzymes, into 5-deoxyribose and adenine. This is 5'-methylthioadenosine/S-adenosylhomocysteine nucleosidase from Shewanella putrefaciens (strain CN-32 / ATCC BAA-453).